The sequence spans 1506 residues: MAKQGSKEKKGYPELKEVIKATCKIRVGPGKETLTEGNCLWALKTIDFIFEDLKTEPWTITKMYTVWDRLKGLTPEETSKREFASLQATLACIMCSQMGMKPETVQAAKGIISMKEGLHENKEAKGEKVEQLYPNLEKHREVYPIVNLQAGGRSWKAVESVVFQQLQTVAMQHGLVSEDFERQLAYYATTWTSKDILEVLAMMPGNRAQKELIQGKLNEEAERWVRQNPPGPNVLTVDQIMGVGQTNQQASQANMDQARQICLQWVITALRSVRHMSHRPGNPMLVKQKNTESYEDFIARLLEAIDAEPVTDPIKTYLKVTLSYTNASTDCQKQMDRTLGTRVQQATVEEKMQACRDVGSEGFKMQLLAQALRPQGKAGHKGVNQKCYNCGKPGHLARQCRQGIICHHCGKRGHMQKDCRQKKQQGKQQEGATCGAVRAPYVVTEAPPKIEIKVGTRWKKLLVDTGADKTIVTSHDMSGIPKGRIILQGIGGIIEGEKWEQVHLQYKDKMIKGTIVVLATSPVEVLGRDNMRELGIGLIMANLEEKKIPSTRVRLKEGCKGPHIAQWPLTQEKLEGLKEIVDRLEKEGKVGRAPPHWTCNTPIFCIKKKSGKWRMLIDFRELNKQTEDLAEAQLGLPHPGGLQRKKHVTILDIGDAYFTIPLYEPYRQYTCFTMLSPNNLGPCVRYYWKVLPQGWKLSPAVYQFTMQKILRGWIEEHPMIQFGIYMDDIYIGSDLGLEEHRGIVNELASYIAQYGFMLPEDKRQEGYPAKWLGFELHPEKWKFQKHTLPEITEGPITLNKLQKLVGDLVWRQSLIGKSIPNILKLMEGDRALQSERYIESIHVREWEACRQKLKEMEGNYYDEEKDIYGQLDWGNKAIEYIVFQEKGKPLWVNVVHSIKNLSQAQQIIKAAQKLTQEVIIRTGKIPWILLPGREEDWILELQMGNINWMPSFWSCYKGSVRWKKRNVIAELVPGPTYYTDGGKKNGRGSLGYIASTGEKFRIHEEGTNQQLELRAIEEACKQGPEKMNIVTDSRYAYEFMLRNWDEEVIRNPIQARIMELVHNKEKIGVHWVPGHKGIPQNEEIDRYISEIFLAKEGRGILQKRAEDAGYDLICPQEISIPAGQVKRIAIDLKINLKKDQWAMIGTKSSFANKGVFVQGGIIDSGYQGTIQVVIYNSNNKEVVIPQGRKFAQLILMPLIHEELEPWGETRKTERGEQGFGSTGMYWIENIPLAEEEHNKWHQDAVSLHLEFGIPRTAAEDIVQQCDVCQENKMPSTLRGSNKRGIDHWQVDYTHYEDKIILVWVETNSGLIYAERVKGETGQEFRVQTMKWYAMFAPKSLQSDNGPAFVAESTQLLMKYLGIEHTTGIPWNPQSQALVERTHQTLKNTLEKLIPMFNAFESALAGTLITLNIKRKGGLGTSPMDIFIFNKEQQRIQQQSKSKQEKIRFCYYRTRKRGHPGEWQGPTQVLWGGDGAIVVKDRGTDRYLVIANKDVKFIPPPKEIQKE.

2 CCHC-type zinc fingers span residues 385 to 402 and 404 to 421; these read QKCYNCGKPGHLARQCRQ and IICHHCGKRGHMQKDCRQ. In terms of domain architecture, Peptidase A2 spans 459-530; sequence KKLLVDTGAD…SPVEVLGRDN (72 aa). Aspartate 464 functions as the Protease; shared with dimeric partner in the catalytic mechanism. One can recognise a Reverse transcriptase domain in the interval 587–776; sequence EGKVGRAPPH…YPAKWLGFEL (190 aa). Residues aspartate 652, aspartate 727, aspartate 728, aspartate 980, glutamate 1012, aspartate 1032, and aspartate 1085 each coordinate Mg(2+). One can recognise an RNase H type-1 domain in the interval 971-1093; it reads LVPGPTYYTD…IDRYISEIFL (123 aa). The Integrase-type zinc-finger motif lies at 1228 to 1269; it reads ENIPLAEEEHNKWHQDAVSLHLEFGIPRTAAEDIVQQCDVCQ. Positions 1237, 1241, 1265, and 1268 each coordinate Zn(2+). The Integrase catalytic domain occupies 1270–1430; the sequence is ENKMPSTLRG…SPMDIFIFNK (161 aa). Aspartate 1291, aspartate 1343, and glutamate 1379 together coordinate Mg(2+). Residues 1447 to 1499 constitute a DNA-binding region (integrase-type); it reads RFCYYRTRKRGHPGEWQGPTQVLWGGDGAIVVKDRGTDRYLVIANKDVKFIPP.

It belongs to the retroviral Pol polyprotein family. As to quaternary structure, homotetramer; further associates as a homohexadecamer. The cofactor is Mg(2+). Specific enzymatic cleavages by the viral protease yield mature proteins.

It is found in the virion. It carries out the reaction Endonucleolytic cleavage to 5'-phosphomonoester.. The catalysed reaction is 3'-end directed exonucleolytic cleavage of viral RNA-DNA hybrid.. The enzyme catalyses dUTP + H2O = dUMP + diphosphate + H(+). It catalyses the reaction DNA(n) + a 2'-deoxyribonucleoside 5'-triphosphate = DNA(n+1) + diphosphate. Mediates, with Gag polyprotein, the essential events in virion assembly, including binding the plasma membrane, making the protein-protein interactions necessary to create spherical particles, recruiting the viral Env proteins, and packaging the genomic RNA via direct interactions with the RNA packaging sequence. In terms of biological role, targets the polyprotein to the plasma membrane. Functionally, forms the core that encapsulates the genomic RNA-nucleocapsid complex in the virion. Its function is as follows. Encapsulates and protects viral dimeric unspliced genomic RNA (gRNA). Binds these RNAs through its zinc fingers. Acts as a nucleic acid chaperone which is involved in rearrangement of nucleic acid secondary structure during gRNA retrotranscription. Also facilitates template switch leading to recombination. The aspartyl protease mediates proteolytic cleavages of Gag and Gag-Pol polyproteins during or shortly after the release of the virion from the plasma membrane. Cleavages take place as an ordered, step-wise cascade to yield mature proteins. This process is called maturation. Displays maximal activity during the budding process just prior to particle release from the cell. In terms of biological role, RT is a multifunctional enzyme that converts the viral dimeric RNA genome into dsDNA in the cytoplasm, shortly after virus entry into the cell. This enzyme displays a DNA polymerase activity that can copy either DNA or RNA templates, and a ribonuclease H (RNase H) activity that cleaves the RNA strand of RNA-DNA heteroduplexes in a partially processive 3' to 5' endonucleasic mode. Conversion of viral genomic RNA into dsDNA requires many steps. A tRNA-Trp binds to the primer-binding site (PBS) situated at the 5' end of the viral RNA. RT uses the 3' end of the tRNA primer to perfom a short round of RNA-dependent minus-strand DNA synthesis. The reading proceeds through the U5 region and ends after the repeated (R) region which is present at both ends of viral RNA. The portion of the RNA-DNA heteroduplex is digested by the RNase H, resulting in a ssDNA product attached to the tRNA primer. This ssDNA/tRNA hybridizes with the identical R region situated at the 3' end of viral RNA. This template exchange, known as minus-strand DNA strong stop transfer, can be either intra- or intermolecular. RT uses the 3' end of this newly synthesized short ssDNA to perfom the RNA-dependent minus-strand DNA synthesis of the whole template. RNase H digests the RNA template except for a polypurine tract (PPT) situated at the 5' end of the genome. It is not clear if both polymerase and RNase H activities are simultaneous. RNase H probably can proceed both in a polymerase-dependent (RNA cut into small fragments by the same RT performing DNA synthesis) and a polymerase-independent mode (cleavage of remaining RNA fragments by free RTs). Secondly, RT performs DNA-directed plus-strand DNA synthesis using the PPT that has not been removed by RNase H as primers. PPT and tRNA primers are then removed by RNase H. The 3' and 5' ssDNA PBS regions hybridize to form a circular dsDNA intermediate. Strand displacement synthesis by RT to the PBS and PPT ends produces a blunt ended, linear dsDNA copy of the viral genome that includes long terminal repeats (LTRs) at both ends. Functionally, catalyzes viral DNA integration into the host chromosome, by performing a series of DNA cutting and joining reactions. The polypeptide is Gag-Pol polyprotein (pol) (Ovis aries (Sheep)).